Consider the following 186-residue polypeptide: Thioredoxin M2, chloroplastic (186 aa).

The transit peptide at 1 to 72 directs the protein to the chloroplast; sequence MAAFTCTSRP…RVSRLRRAVV (72 aa). The Thioredoxin domain occupies 73–186; the sequence is CEAQETTTDI…LTSSLDKFLP (114 aa). Active-site nucleophile residues include C110 and C113. C110 and C113 form a disulfide bridge.

The protein belongs to the thioredoxin family. Plant M-type subfamily. Interacts with G6PD1 and G6PD4. Interacts with PGL3.

The protein localises to the plastid. The protein resides in the chloroplast stroma. Thiol-disulfide oxidoreductase that may participate in various redox reactions. May activate NADP-malate dehydrogenase. In Arabidopsis thaliana (Mouse-ear cress), this protein is Thioredoxin M2, chloroplastic.